A 588-amino-acid polypeptide reads, in one-letter code: DNA ligase (588 aa).

Position 250 (Glu250) interacts with ATP. Lys252 (N6-AMP-lysine intermediate) is an active-site residue. Residues Arg257, Arg272, Glu302, Phe342, Arg417, and Lys423 each contribute to the ATP site.

It belongs to the ATP-dependent DNA ligase family. Mg(2+) is required as a cofactor.

The enzyme catalyses ATP + (deoxyribonucleotide)n-3'-hydroxyl + 5'-phospho-(deoxyribonucleotide)m = (deoxyribonucleotide)n+m + AMP + diphosphate.. Functionally, DNA ligase that seals nicks in double-stranded DNA during DNA replication, DNA recombination and DNA repair. The polypeptide is DNA ligase (Nitrosopumilus maritimus (strain SCM1)).